The chain runs to 235 residues: Serine protease SplA (235 aa).

A signal peptide spans Met1–Ala35. Catalysis depends on charge relay system residues His74, Asp113, and Ser189.

It belongs to the peptidase S1B family.

The protein resides in the secreted. The polypeptide is Serine protease SplA (splA) (Staphylococcus aureus).